The sequence spans 196 residues: Blue copper protein (196 aa).

An N-terminal signal peptide occupies residues 1–22; it reads MAGVFKTVTFLVLVFAAVVVFA. In terms of domain architecture, Phytocyanin spans 23 to 125; it reads EDYDVGDDTE…GQKLSITVVA (103 aa). His66 is a binding site for Cu cation. Cys79 and Cys113 are joined by a disulfide. Asn98 carries N-linked (GlcNAc...) asparagine glycosylation. The Cu cation site is built by Cys107, His112, and Gln117. The tract at residues 133–173 is disordered; that stretch reads TPGAGATPAPGSTPSTGGTTPPTAGGTTTPSGSSGTTTPAG. Residues 135–173 show a composition bias toward low complexity; that stretch reads GAGATPAPGSTPSTGGTTPPTAGGTTTPSGSSGTTTPAG. A lipid anchor (GPI-anchor amidated asparagine) is attached at Asn174. The propeptide at 175–196 is removed in mature form; that stretch reads AASSLGGATFLVAFVSAVVALF.

It localises to the cell membrane. Probably acts as an electron carrier. The protein is Blue copper protein (BCB) of Arabidopsis thaliana (Mouse-ear cress).